Consider the following 969-residue polypeptide: Bifunctional glutamine synthetase adenylyltransferase/adenylyl-removing enzyme (969 aa).

The segment at 1-456 (MNWQANIHKL…HFEQLFAAPH (456 aa)) is adenylyl removase. The interval 466-969 (EKRLAEVWLG…SALLEDESAK (504 aa)) is adenylyl transferase.

The protein belongs to the GlnE family. Mg(2+) serves as cofactor.

The enzyme catalyses [glutamine synthetase]-O(4)-(5'-adenylyl)-L-tyrosine + phosphate = [glutamine synthetase]-L-tyrosine + ADP. It carries out the reaction [glutamine synthetase]-L-tyrosine + ATP = [glutamine synthetase]-O(4)-(5'-adenylyl)-L-tyrosine + diphosphate. Involved in the regulation of glutamine synthetase GlnA, a key enzyme in the process to assimilate ammonia. When cellular nitrogen levels are high, the C-terminal adenylyl transferase (AT) inactivates GlnA by covalent transfer of an adenylyl group from ATP to specific tyrosine residue of GlnA, thus reducing its activity. Conversely, when nitrogen levels are low, the N-terminal adenylyl removase (AR) activates GlnA by removing the adenylyl group by phosphorolysis, increasing its activity. The regulatory region of GlnE binds the signal transduction protein PII (GlnB) which indicates the nitrogen status of the cell. This chain is Bifunctional glutamine synthetase adenylyltransferase/adenylyl-removing enzyme, found in Nitrosococcus oceani (strain ATCC 19707 / BCRC 17464 / JCM 30415 / NCIMB 11848 / C-107).